We begin with the raw amino-acid sequence, 389 residues long: Chitin-binding protein CbpD (389 aa).

An N-terminal signal peptide occupies residues 1 to 25; the sequence is MKHYSATLALLPLTLALFLPQAAHA. The Chitin-binding type-4 domain occupies 26–208; the sequence is HGSMETPPSR…EAFYACIDVS (183 aa).

Can be detected in the extracellular supernatant as a 43 kDa protein and a 23 kDa protein, both proteins have the same N-terminus. Only the larger protein binds chitin, which may protect it from further processing and/or degradation by elastase (lasB). It is not clear whether the short form is functional or a degradation product.

The protein localises to the secreted. Its function is as follows. Binds chitin but does not hydrolyze it, has no detectable protease or staphylolytic activity. The chain is Chitin-binding protein CbpD from Pseudomonas aeruginosa (strain ATCC 15692 / DSM 22644 / CIP 104116 / JCM 14847 / LMG 12228 / 1C / PRS 101 / PAO1).